Here is a 265-residue protein sequence, read N- to C-terminus: uncharacterized protein (265 aa).

This is an uncharacterized protein from Saccharolobus islandicus (Sulfolobus islandicus).